The sequence spans 188 residues: UPF0301 protein ABO_0112 (188 aa).

The protein belongs to the UPF0301 (AlgH) family.

The polypeptide is UPF0301 protein ABO_0112 (Alcanivorax borkumensis (strain ATCC 700651 / DSM 11573 / NCIMB 13689 / SK2)).